The primary structure comprises 248 residues: Cyclo(L-leucyl-L-leucyl) synthase (248 aa).

Ser37 acts as the Nucleophile in catalysis. Substrate-binding positions include Asn40, 180–184 (YVIAE), Tyr204, and 209–210 (KL).

Belongs to the CDPS family. Monomer.

The catalysed reaction is 2 L-leucyl-tRNA(Leu) = cyclo(L-leucyl-L-leucyl) + 2 tRNA(Leu) + 2 H(+). Functionally, involved in the biosynthesis of pulcherrimin, a red extracellular pigment. It uses activated amino acids in the form of aminoacyl-tRNAs (aa-tRNAs) as substrates to catalyze the ATP-independent formation of cyclodipeptides which are intermediates in diketopiperazine (DKP) biosynthetic pathways. Catalyzes the formation of cyclo(L-Leu-L-Leu) (cLL) from L-leucyl-tRNA(Leu). Can also incorporate various nonpolar residues, such as L-phenylalanine, L-leucine and methionine, into cyclodipeptides. This Bacillus subtilis (strain 168) protein is Cyclo(L-leucyl-L-leucyl) synthase (yvmC).